Reading from the N-terminus, the 230-residue chain is Intracellular hyphae protein 1 (230 aa).

An N-terminal signal peptide occupies residues 1-18 (MQTSFVALLAVAASLASA). The segment at 20–102 (PHGGNSYEAS…KNNTLPVPTC (83 aa)) is disordered. 10 consecutive repeat copies span residues 30 to 33 (LPEP), 36 to 39 (LPEP), 42 to 45 (LPEP), 46 to 49 (VEGP), 50 to 53 (YKPK), 57 to 60 (LPEP), 65 to 68 (YKPK), 76 to 79 (VEGP), 80 to 83 (YKPK), and 84 to 87 (LPEP). The segment at 30–87 (LPEPTNLPEPTKLPEPVEGPYKPKPPILPEPIKDNYKPKTPILPEHVEGPYKPKLPEP) is 5 X 4 AA repeats of L-P-E-P. A 2 X 4 AA repeats of V-E-G-P region spans residues 46 to 87 (VEGPYKPKPPILPEPIKDNYKPKTPILPEHVEGPYKPKLPEP). The tract at residues 50 to 83 (YKPKPPILPEPIKDNYKPKTPILPEHVEGPYKPK) is 3 X 4 AA repeats of Y-K-P-K. Residues 74 to 84 (EHVEGPYKPKL) are compositionally biased toward basic and acidic residues. An N-linked (GlcNAc...) asparagine glycan is attached at Asn-94. Residues 108 to 152 (KTHKVKSGESLTTIAEKYDTGICNIAKLNNLADPNFVDLNQDLQI) form the LysM 1 domain. An N-linked (GlcNAc...) asparagine glycan is attached at Asn-161. One can recognise a LysM 2 domain in the interval 183 to 227 (DIYSVVSGDTLTSIAQALQITLQSLKDANPGVVPEHLNVGQKLNV).

Forms a multimeric structure. Post-translationally, N-glycosylated and may be O-glycosylated. As to expression, expressed in penetration hyphae, infection vesicles and primary hyphae (intracellular hyphae).

The protein localises to the secreted. Its subcellular location is the cell wall. Functionally, may have roles in host-pathogen interaction, including establishment and maintenance of biotrophy, prevention of host recognition of the fungus and a barrier to host defense molecules. The chain is Intracellular hyphae protein 1 (CIH1) from Colletotrichum lindemuthianum (Bean anthracnose fungus).